The sequence spans 907 residues: Leucine-rich repeat-containing G-protein coupled receptor 5 (907 aa).

Residues 1–21 (MDTSRVRMLLSLLALLQLVAA) form the signal peptide. Topologically, residues 22 to 561 (GSPPRPDTMP…EHLFGSWLIR (540 aa)) are extracellular. An LRRNT domain is found at 33-64 (GCPSYCHCELDGRMLLRVDCSDLGLSELPSNL). 2 disulfide bridges follow: Cys34/Cys40 and Cys38/Cys52. LRR repeat units follow at residues 44–64 (GRML…PSNL), 65–88 (SVFT…LLHR), 89–112 (LRFL…AFAG), 114–136 (HSLK…ALQN), 137–160 (LRSL…CFSG), 162–184 (HSLR…AFRS), 186–208 (SALQ…AFGN), 209–232 (LSSL…CFDG), 233–256 (LHSL…IKTL), 257–279 (SNLK…AFVG), 281–303 (PSLI…AFQH), 304–327 (LPEL…LTGT), 328–350 (ATLE…VCDQ), 351–375 (LPNL…GCQK), 377–396 (QKID…TFQQ), 397–420 (LFNL…AFST), and 422–444 (PSLI…GLHG). N-linked (GlcNAc...) asparagine glycans are attached at residues Asn63 and Asn77. Residue Asn208 is glycosylated (N-linked (GlcNAc...) asparagine). Cys348 and Cys373 are disulfide-bonded. Cys479 and Cys541 are oxidised to a cystine. A helical membrane pass occupies residues 562-582 (IGVWTTAVLALSCNALVAFTV). One copy of the LRR 18 repeat lies at 564-585 (VWTTAVLALSCNALVAFTVFRT). Residues 583-595 (FRTPLYISSIKLL) are Cytoplasmic-facing. A helical transmembrane segment spans residues 596 to 616 (IGVIAVVDILMGVSSAILAVV). Topologically, residues 617–638 (DTFTFGSFAQHGAWWEGGIGCQ) are extracellular. Cys637 and Cys712 are oxidised to a cystine. A helical membrane pass occupies residues 639–659 (IVGFLSIFASESSVFLLTLAA). Residues 660–682 (LERGFSVKCSSKFEMKAPLSSLK) lie on the Cytoplasmic side of the membrane. A helical transmembrane segment spans residues 683-703 (AIILLCVLLALTIATVPLLGG). Residues 704–723 (SEYNASPLCLPLPFGEPSTT) lie on the Extracellular side of the membrane. Residues 724-744 (GYMVALVLLNSLCFLIMTIAY) traverse the membrane as a helical segment. Over 745-775 (TRLYCSLEKGELENLWDCSMVKHTALLLFTN) the chain is Cytoplasmic. The chain crosses the membrane as a helical span at residues 776–796 (CILYCPVAFLSFSSLLNLTFI). Residues 797-802 (SPEVIK) lie on the Extracellular side of the membrane. A helical membrane pass occupies residues 803 to 823 (FILLVIVPLPACLNPLLYIVF). Residues 824–907 (NPHFKEDMGS…LSSVAFVPCL (84 aa)) lie on the Cytoplasmic side of the membrane.

It belongs to the G-protein coupled receptor 1 family. Identified in a complex composed of RNF43, LGR5 and RSPO1. Also interacts with other R-spondin ligands, including RSPO2, RSPO3 and RSPO4.

The protein resides in the cell membrane. Its subcellular location is the golgi apparatus. It is found in the trans-Golgi network membrane. Receptor for R-spondins that potentiates the canonical Wnt signaling pathway and acts as a stem cell marker of the intestinal epithelium and the hair follicle. Upon binding to R-spondins (RSPO1, RSPO2, RSPO3 or RSPO4), associates with phosphorylated LRP6 and frizzled receptors that are activated by extracellular Wnt receptors, triggering the canonical Wnt signaling pathway to increase expression of target genes. In contrast to classical G-protein coupled receptors, does not activate heterotrimeric G-proteins to transduce the signal. Involved in the development and/or maintenance of the adult intestinal stem cells during postembryonic development. The sequence is that of Leucine-rich repeat-containing G-protein coupled receptor 5 (Lgr5) from Rattus norvegicus (Rat).